A 120-amino-acid polypeptide reads, in one-letter code: Large ribosomal subunit protein uL18 (120 aa).

Belongs to the universal ribosomal protein uL18 family. As to quaternary structure, part of the 50S ribosomal subunit; part of the 5S rRNA/L5/L18/L25 subcomplex. Contacts the 5S and 23S rRNAs.

Functionally, this is one of the proteins that bind and probably mediate the attachment of the 5S RNA into the large ribosomal subunit, where it forms part of the central protuberance. The polypeptide is Large ribosomal subunit protein uL18 (Geobacillus sp. (strain WCH70)).